The following is a 177-amino-acid chain: Large ribosomal subunit protein uL6 (177 aa).

This sequence belongs to the universal ribosomal protein uL6 family. Part of the 50S ribosomal subunit.

This protein binds to the 23S rRNA, and is important in its secondary structure. It is located near the subunit interface in the base of the L7/L12 stalk, and near the tRNA binding site of the peptidyltransferase center. The chain is Large ribosomal subunit protein uL6 from Yersinia enterocolitica serotype O:8 / biotype 1B (strain NCTC 13174 / 8081).